Consider the following 126-residue polypeptide: Large ribosomal subunit protein bL20 (126 aa).

The protein belongs to the bacterial ribosomal protein bL20 family.

In terms of biological role, binds directly to 23S ribosomal RNA and is necessary for the in vitro assembly process of the 50S ribosomal subunit. It is not involved in the protein synthesizing functions of that subunit. The chain is Large ribosomal subunit protein bL20 from Nocardia farcinica (strain IFM 10152).